Here is a 328-residue protein sequence, read N- to C-terminus: tRNA uridine(34) hydroxylase (328 aa).

Residues 130–224 (LDEDTVVLDT…YGKDPEVQGE (95 aa)) enclose the Rhodanese domain. Cysteine 184 serves as the catalytic Cysteine persulfide intermediate.

This sequence belongs to the TrhO family.

The catalysed reaction is uridine(34) in tRNA + AH2 + O2 = 5-hydroxyuridine(34) in tRNA + A + H2O. Functionally, catalyzes oxygen-dependent 5-hydroxyuridine (ho5U) modification at position 34 in tRNAs. The polypeptide is tRNA uridine(34) hydroxylase (Streptococcus pyogenes serotype M3 (strain SSI-1)).